The chain runs to 584 residues: 2-succinyl-5-enolpyruvyl-6-hydroxy-3-cyclohexene-1-carboxylate synthase (584 aa).

It belongs to the TPP enzyme family. MenD subfamily. As to quaternary structure, homodimer. Requires Mg(2+) as cofactor. Mn(2+) is required as a cofactor. The cofactor is thiamine diphosphate.

The catalysed reaction is isochorismate + 2-oxoglutarate + H(+) = 5-enolpyruvoyl-6-hydroxy-2-succinyl-cyclohex-3-ene-1-carboxylate + CO2. It participates in quinol/quinone metabolism; 1,4-dihydroxy-2-naphthoate biosynthesis; 1,4-dihydroxy-2-naphthoate from chorismate: step 2/7. Its pathway is quinol/quinone metabolism; menaquinone biosynthesis. Catalyzes the thiamine diphosphate-dependent decarboxylation of 2-oxoglutarate and the subsequent addition of the resulting succinic semialdehyde-thiamine pyrophosphate anion to isochorismate to yield 2-succinyl-5-enolpyruvyl-6-hydroxy-3-cyclohexene-1-carboxylate (SEPHCHC). This Bacillus thuringiensis (strain Al Hakam) protein is 2-succinyl-5-enolpyruvyl-6-hydroxy-3-cyclohexene-1-carboxylate synthase.